Here is a 615-residue protein sequence, read N- to C-terminus: Medium-chain acyl-CoA ligase ACSF2, mitochondrial (615 aa).

A mitochondrion-targeting transit peptide spans 1-42 (MAVYVGMLRVARLCARSPRVLGARVGLSRVWQEARLWGVRPL). An N6-acetyllysine modification is found at lysine 179. Lysine 182 is subject to N6-acetyllysine; alternate. N6-succinyllysine; alternate is present on lysine 182. Position 199 is an N6-acetyllysine (lysine 199). 263 to 271 (TSGTTGSPK) lines the ATP pocket. An N6-acetyllysine mark is found at lysine 340 and lysine 398. The residue at position 478 (lysine 478) is an N6-succinyllysine. Aspartate 493 and arginine 508 together coordinate ATP. Lysine 510 carries the post-translational modification N6-acetyllysine. N6-acetyllysine; alternate occurs at positions 544 and 570. Lysine 544 and lysine 570 each carry N6-succinyllysine; alternate. Lysine 599 is an ATP binding site. Lysine 599 bears the N6-succinyllysine mark.

This sequence belongs to the ATP-dependent AMP-binding enzyme family.

It localises to the mitochondrion. The enzyme catalyses a medium-chain fatty acid + ATP + CoA = a medium-chain fatty acyl-CoA + AMP + diphosphate. The catalysed reaction is octanoate + ATP + CoA = octanoyl-CoA + AMP + diphosphate. Functionally, acyl-CoA synthases catalyze the initial reaction in fatty acid metabolism, by forming a thioester with CoA. Has some preference toward medium-chain substrates. Plays a role in adipocyte differentiation. This Bos taurus (Bovine) protein is Medium-chain acyl-CoA ligase ACSF2, mitochondrial.